We begin with the raw amino-acid sequence, 377 residues long: Serine/threonine-protein phosphatase PP2A-2 catalytic subunit (377 aa).

The interval 1–66 (MDMEIDDPMH…SGIADHKSSK (66 aa)) is disordered. The segment covering 28 to 40 (DDGKNNTKARSND) has biased composition (basic and acidic residues). Residue S38 is modified to Phosphoserine. T43 is subject to Phosphothreonine. D125, H127, D153, and N185 together coordinate Mn(2+). H186 serves as the catalytic Proton donor. 2 residues coordinate Mn(2+): H235 and H309. At L377 the chain carries Leucine methyl ester.

Belongs to the PPP phosphatase family. PP-2A subfamily. As to quaternary structure, inactivated in a complex with phosphatase methylesterase PPE1 (PP2Ai). Interacts with phosphatase 2A activator RRD2, which can reactivate PP2Ai by dissociating the catalytic subunit from the complex. Interacts with TAP42. Mn(2+) serves as cofactor. Reversibly methyl esterified on Leu-377 by leucine carboxyl methyltransferase 1 (PPM1) and protein phosphatase methylesterase 1 (PPE1). Carboxyl methylation influences the affinity of the catalytic subunit for the different regulatory subunits, thereby modulating the PP2A holoenzyme's substrate specificity, enzyme activity and cellular localization.

It catalyses the reaction O-phospho-L-seryl-[protein] + H2O = L-seryl-[protein] + phosphate. It carries out the reaction O-phospho-L-threonyl-[protein] + H2O = L-threonyl-[protein] + phosphate. In terms of biological role, exact function not known, phosphatase 2A performs an essential cellular function. The protein is Serine/threonine-protein phosphatase PP2A-2 catalytic subunit (PPH22) of Saccharomyces cerevisiae (strain ATCC 204508 / S288c) (Baker's yeast).